The sequence spans 566 residues: SRSF protein kinase 3 (566 aa).

Residues 1 to 13 (MSASTGGGGGGDS) are compositionally biased toward gly residues. Residues 1–60 (MSASTGGGGGGDSGSSSSSSSQASCGPEPSGSELAPPTPAPRMLQGLLGSDDEEQEDPKD) are disordered. Over residues 14–26 (GSSSSSSSQASCG) the composition is skewed to low complexity. Serine 50 is subject to Phosphoserine. The 486-residue stretch at 79–564 (YHVVRKLGWG…AADCLQHPWL (486 aa)) folds into the Protein kinase domain. ATP contacts are provided by residues 85–93 (LGWGHFSTV) and lysine 108. Aspartate 212 serves as the catalytic Proton acceptor. Positions 236-254 (EWQQSGAPPPSRSTVSTAP) are enriched in polar residues. 2 disordered regions span residues 236–283 (EWQQ…LLEE) and 295–353 (EAAA…SGFS). The span at 263-278 (SKNKRKKMRRKRKQQK) shows a compositional bias: basic residues. Residue serine 329 is modified to Phosphoserine. Positions 330–339 (PASSSPAPGG) are enriched in low complexity. The segment covering 344 to 353 (SPGSQTSGFS) has biased composition (polar residues).

This sequence belongs to the protein kinase superfamily. Highly expressed in skeletal muscle, heart, uterus and parorchis. Weakly expressed in brain, stomach, small intestine and ovary.

It is found in the nucleus. Its subcellular location is the cytoplasm. The enzyme catalyses L-seryl-[protein] + ATP = O-phospho-L-seryl-[protein] + ADP + H(+). It carries out the reaction L-threonyl-[protein] + ATP = O-phospho-L-threonyl-[protein] + ADP + H(+). Serine/arginine-rich protein-specific kinase which specifically phosphorylates its substrates at serine residues located in regions rich in arginine/serine dipeptides, known as RS domains. Phosphorylates the SR splicing factor SRSF1 and the lamin-B receptor (LBR) in vitro. Required for normal muscle development. In Sus scrofa (Pig), this protein is SRSF protein kinase 3 (SRPK3).